Consider the following 739-residue polypeptide: Homeobox protein SIX5 (739 aa).

Composition is skewed to low complexity over residues 1-24, 34-61, and 74-83; these read MATL…AAAA, QLLQ…AAGA, and PEAASEPPTG. Disordered stretches follow at residues 1–84, 251–294, 361–381, and 617–650; these read MATL…PTGL, NRRQ…AAPV, LTGG…SETK, and LSAQ…FPAP. Residues 201 to 260 constitute a DNA-binding region (homeobox); it reads GEETVYCFKERSRAALKACYRGNRYPTPDEKRRLATLTGLSLTQVSNWFKNRRQRDRTGA. The span at 279–289 shows a compositional bias: basic and acidic residues; that stretch reads ESSRSPEDLER. Residues 617-646 are compositionally biased toward low complexity; sequence LSAQQPPPAAATTSSTSLPFSPDSPGLLPN.

Belongs to the SIX/Sine oculis homeobox family. In terms of assembly, probably binds DNA dimer. Interacts with EYA3, and probably EYA1 and EYA2. Expressed in adult but not in fetal eyes. Found in corneal epithelium and endothelium, lens epithelium, ciliary body epithelia, cellular layers of the retina and the sclera.

The protein localises to the cytoplasm. The protein resides in the nucleus. Transcription factor that is thought to be involved in regulation of organogenesis. May be involved in determination and maintenance of retina formation. Binds a 5'-GGTGTCAG-3' motif present in the ARE regulatory element of ATP1A1. Binds a 5'-TCA[AG][AG]TTNC-3' motif present in the MEF3 element in the myogenin promoter, and in the IGFBP5 promoter. Thought to be regulated by association with Dach and Eya proteins, and seems to be coactivated by EYA1, EYA2 and EYA3. In Homo sapiens (Human), this protein is Homeobox protein SIX5 (SIX5).